The primary structure comprises 379 residues: Cytochrome b (379 aa).

A run of 4 helical transmembrane segments spans residues 33-53, 77-98, 113-133, and 178-198; these read FGSL…FLAM, WLIR…YLHI, WNVG…GYVL, and FFAF…VHLI. 2 residues coordinate heme b: H83 and H97. H182 and H196 together coordinate heme b. Residue H201 coordinates a ubiquinone. Helical transmembrane passes span 226–246, 288–308, 320–340, and 347–367; these read YKDI…ALFS, LGGV…PLLH, FTQV…WIGG, and FIII…VLAP.

The protein belongs to the cytochrome b family. As to quaternary structure, the cytochrome bc1 complex contains 3 respiratory subunits (MT-CYB, CYC1 and UQCRFS1), 2 core proteins (UQCRC1 and UQCRC2) and probably 6 low-molecular weight proteins. The cofactor is heme b.

Its subcellular location is the mitochondrion inner membrane. Functionally, component of the ubiquinol-cytochrome c reductase complex (complex III or cytochrome b-c1 complex) that is part of the mitochondrial respiratory chain. The b-c1 complex mediates electron transfer from ubiquinol to cytochrome c. Contributes to the generation of a proton gradient across the mitochondrial membrane that is then used for ATP synthesis. The chain is Cytochrome b (mt-cyb) from Poeciliopsis occidentalis (Gila topminnow).